The sequence spans 369 residues: Iron-sulfur cluster assembly SufBD family protein AF_2365 (369 aa).

It belongs to the iron-sulfur cluster assembly SufBD family.

The protein is Iron-sulfur cluster assembly SufBD family protein AF_2365 of Archaeoglobus fulgidus (strain ATCC 49558 / DSM 4304 / JCM 9628 / NBRC 100126 / VC-16).